The primary structure comprises 30 residues: Cycloviolacin-O10 (30 aa).

Positions 1-30 form a cross-link, cyclopeptide (Gly-Asn); that stretch reads GIPCGESCVYIPCLTSAVGCSCKSKVCYRN. Disulfide bonds link cysteine 4–cysteine 20, cysteine 8–cysteine 22, and cysteine 13–cysteine 27.

Post-translationally, this is a cyclic peptide. As to expression, expressed in petals and roots but not in leaves, petioles and runners (at protein level).

In terms of biological role, probably participates in a plant defense mechanism. This is Cycloviolacin-O10 from Viola odorata (Sweet violet).